The sequence spans 431 residues: Ribosome assembly protein SQT1 (431 aa).

WD repeat units follow at residues 63–102 (KHTD…PKFA), 107–146 (GYGE…AQWK), 149–192 (SQMQ…GSLE), 199–243 (VHQQ…QLFK), 309–348 (ELDA…VRHK), and 350–387 (VLED…EKFV).

In terms of assembly, interacts strongly with QSR1. Part of an oligomeric protein complex that is loosely associated with ribosomes.

Functionally, may be involved in the late step of 60S ribosomal subunit assembly or modification in the cytoplasm. This is Ribosome assembly protein SQT1 (SQT1) from Saccharomyces cerevisiae (strain ATCC 204508 / S288c) (Baker's yeast).